The chain runs to 500 residues: Aspartyl/glutamyl-tRNA(Asn/Gln) amidotransferase subunit B (500 aa).

The protein belongs to the GatB/GatE family. GatB subfamily. Heterotrimer of A, B and C subunits.

The enzyme catalyses L-glutamyl-tRNA(Gln) + L-glutamine + ATP + H2O = L-glutaminyl-tRNA(Gln) + L-glutamate + ADP + phosphate + H(+). It carries out the reaction L-aspartyl-tRNA(Asn) + L-glutamine + ATP + H2O = L-asparaginyl-tRNA(Asn) + L-glutamate + ADP + phosphate + 2 H(+). Its function is as follows. Allows the formation of correctly charged Asn-tRNA(Asn) or Gln-tRNA(Gln) through the transamidation of misacylated Asp-tRNA(Asn) or Glu-tRNA(Gln) in organisms which lack either or both of asparaginyl-tRNA or glutaminyl-tRNA synthetases. The reaction takes place in the presence of glutamine and ATP through an activated phospho-Asp-tRNA(Asn) or phospho-Glu-tRNA(Gln). In Rhizobium johnstonii (strain DSM 114642 / LMG 32736 / 3841) (Rhizobium leguminosarum bv. viciae), this protein is Aspartyl/glutamyl-tRNA(Asn/Gln) amidotransferase subunit B.